Consider the following 451-residue polypeptide: Phenylalanine--tRNA ligase, mitochondrial (451 aa).

Substrate is bound by residues 157 to 160 (SAHQ), R179, 186 to 188 (QHY), and 193 to 195 (QLE). K202 is subject to N6-acetyllysine. Residues E287 and F312 each coordinate substrate. The FDX-ACB domain maps to 358–450 (SKYPAVINDI…AVQLLGVEGR (93 aa)).

This sequence belongs to the class-II aminoacyl-tRNA synthetase family. Monomer.

Its subcellular location is the mitochondrion matrix. It localises to the mitochondrion. It catalyses the reaction tRNA(Phe) + L-phenylalanine + ATP = L-phenylalanyl-tRNA(Phe) + AMP + diphosphate + H(+). Its function is as follows. Is responsible for the charging of tRNA(Phe) with phenylalanine in mitochondrial translation. To a lesser extent, also catalyzes direct attachment of m-Tyr (an oxidized version of Phe) to tRNA(Phe), thereby opening the way for delivery of the misacylated tRNA to the ribosome and incorporation of ROS-damaged amino acid into proteins. This Homo sapiens (Human) protein is Phenylalanine--tRNA ligase, mitochondrial (FARS2).